We begin with the raw amino-acid sequence, 185 residues long: Elongation factor P (185 aa).

It belongs to the elongation factor P family.

Its subcellular location is the cytoplasm. It participates in protein biosynthesis; polypeptide chain elongation. Involved in peptide bond synthesis. Stimulates efficient translation and peptide-bond synthesis on native or reconstituted 70S ribosomes in vitro. Probably functions indirectly by altering the affinity of the ribosome for aminoacyl-tRNA, thus increasing their reactivity as acceptors for peptidyl transferase. This Streptococcus uberis (strain ATCC BAA-854 / 0140J) protein is Elongation factor P.